A 147-amino-acid chain; its full sequence is Peptide deformylase (147 aa).

Residues Cys88 and His130 each coordinate Fe cation. Glu131 is an active-site residue. Position 134 (His134) interacts with Fe cation.

This sequence belongs to the polypeptide deformylase family. Requires Fe(2+) as cofactor.

It catalyses the reaction N-terminal N-formyl-L-methionyl-[peptide] + H2O = N-terminal L-methionyl-[peptide] + formate. Functionally, removes the formyl group from the N-terminal Met of newly synthesized proteins. Requires at least a dipeptide for an efficient rate of reaction. N-terminal L-methionine is a prerequisite for activity but the enzyme has broad specificity at other positions. The polypeptide is Peptide deformylase (Clostridium botulinum (strain Alaska E43 / Type E3)).